The primary structure comprises 97 residues: Citrate lyase acyl carrier protein 2 (97 aa).

Serine 14 bears the O-(phosphoribosyl dephospho-coenzyme A)serine mark.

It belongs to the CitD family. As to quaternary structure, oligomer with a subunit composition of (alpha,beta,gamma)6.

The protein resides in the cytoplasm. Covalent carrier of the coenzyme of citrate lyase. This chain is Citrate lyase acyl carrier protein 2, found in Salmonella paratyphi A (strain ATCC 9150 / SARB42).